The chain runs to 179 residues: Large ribosomal subunit protein uL6 (179 aa).

Belongs to the universal ribosomal protein uL6 family. As to quaternary structure, part of the 50S ribosomal subunit.

Functionally, this protein binds to the 23S rRNA, and is important in its secondary structure. It is located near the subunit interface in the base of the L7/L12 stalk, and near the tRNA binding site of the peptidyltransferase center. This is Large ribosomal subunit protein uL6 from Trichlorobacter lovleyi (strain ATCC BAA-1151 / DSM 17278 / SZ) (Geobacter lovleyi).